Here is a 159-residue protein sequence, read N- to C-terminus: 2-C-methyl-D-erythritol 2,4-cyclodiphosphate synthase (159 aa).

A divalent metal cation contacts are provided by Asp10 and His12. Residues 10–12 (DVH) and 37–38 (HS) each bind 4-CDP-2-C-methyl-D-erythritol 2-phosphate. His45 is a binding site for a divalent metal cation. Residues 59-61 (DIG), 64-68 (FLDTD), 103-109 (AQAPKML), 135-138 (TTTE), Phe142, and Arg145 contribute to the 4-CDP-2-C-methyl-D-erythritol 2-phosphate site.

It belongs to the IspF family. In terms of assembly, homotrimer. It depends on a divalent metal cation as a cofactor.

It carries out the reaction 4-CDP-2-C-methyl-D-erythritol 2-phosphate = 2-C-methyl-D-erythritol 2,4-cyclic diphosphate + CMP. Its pathway is isoprenoid biosynthesis; isopentenyl diphosphate biosynthesis via DXP pathway; isopentenyl diphosphate from 1-deoxy-D-xylulose 5-phosphate: step 4/6. Functionally, involved in the biosynthesis of isopentenyl diphosphate (IPP) and dimethylallyl diphosphate (DMAPP), two major building blocks of isoprenoid compounds. Catalyzes the conversion of 4-diphosphocytidyl-2-C-methyl-D-erythritol 2-phosphate (CDP-ME2P) to 2-C-methyl-D-erythritol 2,4-cyclodiphosphate (ME-CPP) with a corresponding release of cytidine 5-monophosphate (CMP). This Francisella tularensis subsp. holarctica (strain OSU18) protein is 2-C-methyl-D-erythritol 2,4-cyclodiphosphate synthase.